The chain runs to 297 residues: N-acetylneuraminate lyase (297 aa).

The aceneuramate site is built by Ser-47 and Thr-48. Tyr-137 (proton donor) is an active-site residue. Residue Lys-165 is the Schiff-base intermediate with substrate of the active site. Aceneuramate-binding residues include Thr-167, Gly-189, Asp-191, Glu-192, and Ser-208.

This sequence belongs to the DapA family. NanA subfamily. Homotetramer.

It localises to the cytoplasm. It carries out the reaction aceneuramate = aldehydo-N-acetyl-D-mannosamine + pyruvate. It participates in amino-sugar metabolism; N-acetylneuraminate degradation; D-fructose 6-phosphate from N-acetylneuraminate: step 1/5. Functionally, catalyzes the reversible aldol cleavage of N-acetylneuraminic acid (sialic acid; Neu5Ac) to form pyruvate and N-acetylmannosamine (ManNAc) via a Schiff base intermediate. The protein is N-acetylneuraminate lyase of Escherichia coli (strain SMS-3-5 / SECEC).